We begin with the raw amino-acid sequence, 109 residues long: UPF0060 membrane protein PA14_21660 (109 aa).

Helical transmembrane passes span 5 to 25 (LWFV…YLWL), 27 to 47 (LGKS…FALL), 59 to 79 (AYAA…AFVE), and 84 to 104 (LWSD…VLFG).

It belongs to the UPF0060 family.

Its subcellular location is the cell inner membrane. The chain is UPF0060 membrane protein PA14_21660 from Pseudomonas aeruginosa (strain UCBPP-PA14).